Consider the following 184-residue polypeptide: ATP synthase subunit b, chloroplastic (184 aa).

The helical transmembrane segment at 27-49 (LATNLINLSVVLGVLIFFGKGVL) threads the bilayer.

This sequence belongs to the ATPase B chain family. In terms of assembly, F-type ATPases have 2 components, F(1) - the catalytic core - and F(0) - the membrane proton channel. F(1) has five subunits: alpha(3), beta(3), gamma(1), delta(1), epsilon(1). F(0) has four main subunits: a(1), b(1), b'(1) and c(10-14). The alpha and beta chains form an alternating ring which encloses part of the gamma chain. F(1) is attached to F(0) by a central stalk formed by the gamma and epsilon chains, while a peripheral stalk is formed by the delta, b and b' chains.

Its subcellular location is the plastid. It is found in the chloroplast thylakoid membrane. In terms of biological role, f(1)F(0) ATP synthase produces ATP from ADP in the presence of a proton or sodium gradient. F-type ATPases consist of two structural domains, F(1) containing the extramembraneous catalytic core and F(0) containing the membrane proton channel, linked together by a central stalk and a peripheral stalk. During catalysis, ATP synthesis in the catalytic domain of F(1) is coupled via a rotary mechanism of the central stalk subunits to proton translocation. Functionally, component of the F(0) channel, it forms part of the peripheral stalk, linking F(1) to F(0). The polypeptide is ATP synthase subunit b, chloroplastic (Guizotia abyssinica (Niger)).